The primary structure comprises 405 residues: Acetylornithine aminotransferase (405 aa).

Pyridoxal 5'-phosphate-binding positions include glycine 107–alanine 108 and phenylalanine 140. Arginine 143 is a binding site for N(2)-acetyl-L-ornithine. A pyridoxal 5'-phosphate-binding site is contributed by aspartate 225–glutamine 228. Lysine 254 carries the post-translational modification N6-(pyridoxal phosphate)lysine. Serine 282 provides a ligand contact to N(2)-acetyl-L-ornithine. Threonine 283 contacts pyridoxal 5'-phosphate.

It belongs to the class-III pyridoxal-phosphate-dependent aminotransferase family. ArgD subfamily. In terms of assembly, homodimer. Pyridoxal 5'-phosphate is required as a cofactor.

Its subcellular location is the cytoplasm. The enzyme catalyses N(2)-acetyl-L-ornithine + 2-oxoglutarate = N-acetyl-L-glutamate 5-semialdehyde + L-glutamate. The protein operates within amino-acid biosynthesis; L-arginine biosynthesis; N(2)-acetyl-L-ornithine from L-glutamate: step 4/4. The protein is Acetylornithine aminotransferase of Shewanella oneidensis (strain ATCC 700550 / JCM 31522 / CIP 106686 / LMG 19005 / NCIMB 14063 / MR-1).